The chain runs to 137 residues: Phosphomevalonate dehydratase small subunit (137 aa).

The active-site Proton acceptor is the Ser-62.

Belongs to the AcnX type II small subunit family. Heterodimer composed of a large subunit (PMDh-L) and a small subunit (PMDh-S).

The enzyme catalyses (R)-5-phosphomevalonate = (2E)-3-methyl-5-phosphooxypent-2-enoate + H2O. It participates in isoprenoid biosynthesis; isopentenyl diphosphate biosynthesis via mevalonate pathway. In terms of biological role, component of a hydro-lyase that catalyzes the dehydration of mevalonate 5-phosphate (MVA5P) to form trans-anhydromevalonate 5-phosphate (tAHMP). Involved in the archaeal mevalonate (MVA) pathway, which provides fundamental precursors for isoprenoid biosynthesis, such as isopentenyl diphosphate (IPP) and dimethylallyl diphosphate (DMAPP). This chain is Phosphomevalonate dehydratase small subunit, found in Methanothrix thermoacetophila (strain DSM 6194 / JCM 14653 / NBRC 101360 / PT) (Methanosaeta thermophila).